The chain runs to 178 residues: CDP-archaeol synthase (178 aa).

5 helical membrane-spanning segments follow: residues 7 to 27, 56 to 76, 91 to 111, 125 to 145, and 149 to 169; these read LFVS…ACIF, FFGV…SNLG, VIIG…GSFL, VLDQ…YYLV, and ISIT…IIAY.

Belongs to the CDP-archaeol synthase family. The cofactor is Mg(2+).

It is found in the cell membrane. It catalyses the reaction 2,3-bis-O-(geranylgeranyl)-sn-glycerol 1-phosphate + CTP + H(+) = CDP-2,3-bis-O-(geranylgeranyl)-sn-glycerol + diphosphate. It functions in the pathway membrane lipid metabolism; glycerophospholipid metabolism. In terms of biological role, catalyzes the formation of CDP-2,3-bis-(O-geranylgeranyl)-sn-glycerol (CDP-archaeol) from 2,3-bis-(O-geranylgeranyl)-sn-glycerol 1-phosphate (DGGGP) and CTP. This reaction is the third ether-bond-formation step in the biosynthesis of archaeal membrane lipids. In Methanococcus vannielii (strain ATCC 35089 / DSM 1224 / JCM 13029 / OCM 148 / SB), this protein is CDP-archaeol synthase.